A 101-amino-acid polypeptide reads, in one-letter code: ATP-dependent Clp protease adapter protein ClpS (101 aa).

The protein belongs to the ClpS family. Binds to the N-terminal domain of the chaperone ClpA.

Involved in the modulation of the specificity of the ClpAP-mediated ATP-dependent protein degradation. The sequence is that of ATP-dependent Clp protease adapter protein ClpS from Corynebacterium jeikeium (strain K411).